The following is a 514-amino-acid chain: WD repeat-containing protein 26 (514 aa).

The 76-residue stretch at glutamate 9–glutamate 84 folds into the CTLH domain. 6 WD repeats span residues glutamate 206 to lysine 245, glycine 252 to arginine 291, serine 297 to glutamate 337, glutamine 377 to lysine 416, glycine 419 to glutamate 461, and glycine 464 to asparagine 504.

In terms of assembly, forms homooligomers. Identified in the CTLH complex that contains GID4, RANBP9 and/or RANBP10, MKLN1, MAEA, RMND5A (or alternatively its paralog RMND5B), GID8, ARMC8, WDR26 and YPEL5. Within this complex, MAEA, RMND5A (or alternatively its paralog RMND5B), GID8, WDR26, and RANBP9 and/or RANBP10 form the catalytic core, while GID4, MKLN1, ARMC8 and YPEL5 have ancillary roles. Interacts with DDB1-CUL4A/B E3 ligase complexes. Forms a complex composed of at least WDR26, a G-beta:gamma unit, and PLCB2. Interacts with AXIN1.

The protein resides in the cytoplasm. The protein localises to the nucleus. Its subcellular location is the mitochondrion. Functionally, G-beta-like protein involved in cell signal transduction. Acts as a negative regulator in MAPK signaling pathway. Functions as a scaffolding protein to promote G beta:gamma-mediated PLCB2 plasma membrane translocation and subsequent activation in leukocytes. Core component of the CTLH E3 ubiquitin-protein ligase complex that selectively accepts ubiquitin from UBE2H and mediates ubiquitination and subsequent proteasomal degradation of the transcription factor HBP1. Acts as a negative regulator of the canonical Wnt signaling pathway through preventing ubiquitination of beta-catenin CTNNB1 by the beta-catenin destruction complex, thus negatively regulating CTNNB1 degradation. Protects cells from oxidative stress-induced apoptosis via the down-regulation of AP-1 transcriptional activity as well as by inhibiting cytochrome c release from mitochondria. Also protects cells by promoting hypoxia-mediated autophagy and mitophagy. In Rattus norvegicus (Rat), this protein is WD repeat-containing protein 26 (Wdr26).